Here is a 201-residue protein sequence, read N- to C-terminus: Lipopolysaccharide core heptose(II)-phosphate phosphatase (201 aa).

Residues 1–35 (MLAFTLRFIKNKRYLATLAGALVIIAGLTSQHAWS) form the signal peptide.

The protein belongs to the phosphoglycerate mutase family. Ais subfamily.

The protein resides in the periplasm. It functions in the pathway bacterial outer membrane biogenesis; lipopolysaccharide metabolism. In terms of biological role, catalyzes the dephosphorylation of heptose(II) of the outer membrane lipopolysaccharide core. The chain is Lipopolysaccharide core heptose(II)-phosphate phosphatase from Salmonella heidelberg (strain SL476).